A 428-amino-acid chain; its full sequence is Stromal membrane-associated protein 2 (428 aa).

Residues 13-139 (QAVLANLLLE…INVLRKEKDD (127 aa)) enclose the Arf-GAP domain. A C4-type zinc finger spans residues 28-51 (CADCQSKGPRWASWNIGVFICIRC). Phosphoserine occurs at positions 127, 219, 224, 230, and 239. The tract at residues 163–231 (MPQKKEDAQL…SVSRKAVGSM (69 aa)) is interaction with clathrin heavy chains. Residues 218–262 (PSPSSVSRKAVGSMPTAGSAGSVPENLNLFPEPGSKSEETGKKQL) form a disordered region. Basic and acidic residues predominate over residues 252–262 (SKSEETGKKQL). Residues 339 to 428 (MGGMQASMMG…NQTLSPQMWK (90 aa)) are interaction with PICALM.

As to quaternary structure, interacts with ARF1. Interacts with PICALM and clathrin heavy chains.

The protein resides in the cytoplasm. In terms of biological role, GTPase activating protein that acts on ARF1. Can also activate ARF6 (in vitro). May play a role in clathrin-dependent retrograde transport from early endosomes to the trans-Golgi network. This chain is Stromal membrane-associated protein 2 (Smap2), found in Mus musculus (Mouse).